Here is a 638-residue protein sequence, read N- to C-terminus: Phosphomethylpyrimidine synthase (638 aa).

Residues asparagine 243, methionine 272, tyrosine 301, histidine 337, 357-359, 398-401, and glutamate 437 each bind substrate; these read SRG and DGLR. Histidine 441 is a binding site for Zn(2+). Tyrosine 464 lines the substrate pocket. Histidine 505 is a Zn(2+) binding site. 3 residues coordinate [4Fe-4S] cluster: cysteine 585, cysteine 588, and cysteine 593.

The protein belongs to the ThiC family. Homodimer. [4Fe-4S] cluster serves as cofactor.

It catalyses the reaction 5-amino-1-(5-phospho-beta-D-ribosyl)imidazole + S-adenosyl-L-methionine = 4-amino-2-methyl-5-(phosphooxymethyl)pyrimidine + CO + 5'-deoxyadenosine + formate + L-methionine + 3 H(+). It functions in the pathway cofactor biosynthesis; thiamine diphosphate biosynthesis. Catalyzes the synthesis of the hydroxymethylpyrimidine phosphate (HMP-P) moiety of thiamine from aminoimidazole ribotide (AIR) in a radical S-adenosyl-L-methionine (SAM)-dependent reaction. This chain is Phosphomethylpyrimidine synthase, found in Aromatoleum aromaticum (strain DSM 19018 / LMG 30748 / EbN1) (Azoarcus sp. (strain EbN1)).